A 573-amino-acid chain; its full sequence is MLQQGSSSRRSLHGNDFHTLTSPSRRDSLSIPRAVDARSASTIDLFYIPDATVSRRHSTLVANRSDNNGNGAPMRQYNKPNFASSSTSSLPSTRNRPSRYDNMNMNMNMNMNMNMNMNMNMNNHTTSDHNAHPQYRCRPNPSRRHSLMTIPEKYSGSRYSLRSSPPTYSNPRVRKELTPFQLQRKQMKSAFQFPNGENFTPRNQIARLPPSSTFPDSPSSSSLPLTQTGGPSSADNDSIATGTNNRSPQQTKAADANQKSESESPKAIRSNSKKISRFFRKIWSSKSSNSADSVEENSKTKQKRKNPERVVPEPITSLDQPVEIIKQSFSTVNNHETAVPSIKDSGIVQELTALGDNNRIPVLPPPRSPNRPTLSDKRTTKLYYCSQDSSNEDIAPEEKSTVFLKRLQDEWSTVYLNKLPLTASVPSSLSTTTDAANSSFINSSISSPAPSSSSSSSLVSRGPMQSISSSPTPAPSSGSSKSKNAVKSLRFADEIYVNDTWSAADYCRCDNTFLNNFFKGKSQDITNPSTFVGNNLSSTKNISNIEIKMEVNEFKRKEMRVHQDSAKYTHYYL.

Disordered stretches follow at residues M1–R33 and L60–D101. The span at L60–N70 shows a compositional bias: polar residues. N63 carries an N-linked (GlcNAc...) asparagine glycan. The segment covering S84–N95 has biased composition (low complexity). 10 consecutive repeat copies span residues N102–M103, N104–M105, N106–M107, N108–M109, N110–M111, N112–M113, N114–M115, N116–M117, N118–M119, and N120–M121. Residues N102–M121 are 10 X 2 AA tandem repeats of N-M. N-linked (GlcNAc...) asparagine glycosylation occurs at N123. Disordered regions lie at residues I150 to R174, Q192 to N271, K286 to S317, and N357 to T379. The segment covering S157–N170 has biased composition (polar residues). The span at L208–L225 shows a compositional bias: low complexity. Residues T226–K252 are compositionally biased toward polar residues. N-linked (GlcNAc...) asparagine glycosylation is present at N236. 2 N-linked (GlcNAc...) asparagine glycosylation sites follow: N437 and N442. Low complexity-rich tracts occupy residues I441–S457 and S466–K483. Residues I441 to K483 are disordered. N-linked (GlcNAc...) asparagine glycans are attached at residues N498, N535, and N541.

The protein to yeast AFR1. Post-translationally, N-glycosylated.

This is an uncharacterized protein from Saccharomyces cerevisiae (strain ATCC 204508 / S288c) (Baker's yeast).